The chain runs to 467 residues: Translation initiation factor eIF2B subunit delta (467 aa).

Residues 1 to 106 (MGFSAEQAKK…QNPQNSPETD (106 aa)) form a disordered region. A phosphoserine mark is found at Ser-16, Ser-19, Ser-21, and Ser-23. A compositionally biased stretch (polar residues) spans 16 to 37 (SPVSESSSVGGTSPATASSVVS). Residue Thr-27 is modified to Phosphothreonine. Phosphoserine occurs at positions 28 and 37. Residues 51–61 (LKKARKQASRR) are compositionally biased toward basic residues. Low complexity predominate over residues 84-102 (PNKNSNQQKKASKQNPQNS).

The protein belongs to the eIF-2B alpha/beta/delta subunits family. Component of the translation initiation factor 2B (eIF2B) complex which is a heterodecamer of two sets of five different subunits: alpha, beta, gamma, delta and epsilon. Subunits alpha, beta and delta comprise a regulatory subcomplex and subunits epsilon and gamma comprise a catalytic subcomplex. Within the complex, the hexameric regulatory complex resides at the center, with the two heterodimeric catalytic subcomplexes bound on opposite sides.

It localises to the cytoplasm. Its subcellular location is the cytosol. Functionally, acts as a component of the translation initiation factor 2B (eIF2B) complex, which catalyzes the exchange of GDP for GTP on the eukaryotic initiation factor 2 (eIF2) complex gamma subunit. Its guanine nucleotide exchange factor activity is repressed when bound to eIF2 complex phosphorylated on the alpha subunit, thereby limiting the amount of methionyl-initiator methionine tRNA available to the ribosome and consequently global translation is repressed. This Schizosaccharomyces pombe (strain 972 / ATCC 24843) (Fission yeast) protein is Translation initiation factor eIF2B subunit delta (tif224).